We begin with the raw amino-acid sequence, 442 residues long: D-serine dehydratase 2 (442 aa).

N6-(pyridoxal phosphate)lysine is present on Lys118.

Belongs to the serine/threonine dehydratase family. DsdA subfamily. As to quaternary structure, monomer. The cofactor is pyridoxal 5'-phosphate.

It carries out the reaction D-serine = pyruvate + NH4(+). This is D-serine dehydratase 2 from Escherichia coli O6:K15:H31 (strain 536 / UPEC).